A 941-amino-acid polypeptide reads, in one-letter code: PHD finger protein 14 (941 aa).

The segment at 22–295 (DYDSSDDSDF…LSQSKSNEDS (274 aa)) is disordered. A phosphoserine mark is found at serine 26 and serine 29. Residues 36-47 (ASDSEGSGNGSE) are compositionally biased toward low complexity. Acidic residues predominate over residues 60–72 (DSEENILEEELNE). Basic and acidic residues-rich tracts occupy residues 74–85 (IQVKEEQLKNST), 94–109 (QLIKMEKKEEEENGER), and 116–132 (KEKEKEKEREKDKEKAT). Serine 84 carries the phosphoserine modification. The span at 133-166 (VSDSAAASAAGTTPATSPPAVTSPSVPTTTTTTT) shows a compositional bias: low complexity. Serine 189 carries the phosphoserine modification. 2 stretches are compositionally biased toward acidic residues: residues 194–205 (NAMDDYDSEDDN) and 226–249 (DGDNEDDDDEGSGSEEDENDEGND). Residue tyrosine 199 is modified to Phosphotyrosine. Serine 201 is modified (phosphoserine). Threonine 280 is subject to Phosphothreonine. A compositionally biased stretch (polar residues) spans 281–290 (NDSLTLSQSK). Phosphoserine occurs at positions 283, 287, 291, 295, and 301. A PHD-type 1 zinc finger spans residues 312-373 (ILICCVCLGD…PWFCDACKCG (62 aa)). 6 residues coordinate Zn(2+): cysteine 315, cysteine 318, cysteine 332, cysteine 335, histidine 340, and cysteine 343. Serine 352 bears the Phosphoserine mark. Residues cysteine 367, cysteine 370, cysteine 378, cysteine 381, histidine 398, cysteine 401, cysteine 434, cysteine 437, cysteine 451, cysteine 456, histidine 461, cysteine 464, cysteine 488, and histidine 491 each contribute to the Zn(2+) site. The C2HC pre-PHD-type zinc-finger motif lies at 375–408 (SPSCELCPNQDGIFKETDAGRWVHIVCALYVPGV). The PHD-type 2 zinc-finger motif lies at 432-492 (KECSFCEDPR…PFFAYCKQHA (61 aa)). Phosphoserine is present on serine 523. The stretch at 623 to 671 (MIQIQENMAEQKNIKDKLENEQEKLHVEYNKLCESLEELQNLNGKLRSE) forms a coiled coil. The PHD-type 3 zinc-finger motif lies at 718–772 (LYSCGICKKNHDQHLLLLCDTCKLHYHLGCLDPPLTRMPRKTKNSYWQCSECDQA). The Zn(2+) site is built by cysteine 721, cysteine 724, cysteine 736, cysteine 739, histidine 744, cysteine 747, cysteine 766, and cysteine 769. A phosphoserine mark is found at serine 774, serine 775, and serine 828. Positions 804-855 (VPQDVPPEPKKIPIRNTRTRGRKRSFVPEEEKHEERVPRERRQRQSVLQKKP) are disordered. Over residues 829–843 (FVPEEEKHEERVPRE) the composition is skewed to basic and acidic residues. The PHD-type 4 zinc-finger motif lies at 861–914 (RTECSTCKGTGDNENLVRCDECRLCYHFGCLDPPLKKSPKQTGYGWICQECDSS). Cysteine 864, cysteine 867, cysteine 879, cysteine 882, histidine 887, cysteine 890, cysteine 908, and cysteine 911 together coordinate Zn(2+). Positions 912 to 941 (DSSSSKEDENEAEKKNASQELSMEQKTPKK) are disordered. The segment covering 915–928 (SSKEDENEAEKKNA) has biased composition (basic and acidic residues). Over residues 930 to 941 (QELSMEQKTPKK) the composition is skewed to polar residues.

As to expression, high levels detected in testis, lung and spleen and low levels in muscle, heart, intestine and kidney (at protein level). Widely expressed in adult with increased levels in intestine, colon and lung.

It is found in the nucleus. It localises to the chromosome. Its subcellular location is the cytoplasm. Histone-binding protein. Binds preferentially to unmodified histone H3 but can also bind to a lesser extent to histone H3 trimethylated at 'Lys-9' (H3K9me3) as well as to histone H3 monomethylated at 'Lys-27' (H3K27ac) and trimethylated at 'Lys-27' (H3K27me3). Represses PDGFRA expression, thus playing a role in regulation of mesenchymal cell proliferation. Suppresses the expression of CDKN1A/p21 by reducing the level of trimethylation of histone H3 'Lys-4', leading to enhanced proliferation of germinal center B cells. In Mus musculus (Mouse), this protein is PHD finger protein 14 (Phf14).